The chain runs to 229 residues: MAKQPKRMQKWTGDVAATHALDEAVKLVKANANAKFDETVEIAVNLGVDPRHADQQVRGVVALPSGTGRDVRVAVIAKDAKAEEAKAAGAEVVGAEDLVERIQGGFMDFDRVIATPDMMALVGRLGKVLGPRGLMPNPRVGTVTPNVGQAVKDAKGGSIEFRVEKAGIVHAGIGKASFTEEQLTANVKAMVDALNKAKPSGAKGTYVKKVSLSSTMGPGFKIDVASLGV.

The protein belongs to the universal ribosomal protein uL1 family. Part of the 50S ribosomal subunit.

Binds directly to 23S rRNA. The L1 stalk is quite mobile in the ribosome, and is involved in E site tRNA release. Functionally, protein L1 is also a translational repressor protein, it controls the translation of the L11 operon by binding to its mRNA. This chain is Large ribosomal subunit protein uL1, found in Phenylobacterium zucineum (strain HLK1).